The sequence spans 107 residues: Nucleoid-associated protein MCA1327 (107 aa).

It belongs to the YbaB/EbfC family. As to quaternary structure, homodimer.

It is found in the cytoplasm. It localises to the nucleoid. Binds to DNA and alters its conformation. May be involved in regulation of gene expression, nucleoid organization and DNA protection. The protein is Nucleoid-associated protein MCA1327 of Methylococcus capsulatus (strain ATCC 33009 / NCIMB 11132 / Bath).